The following is a 253-amino-acid chain: Major prion protein (253 aa).

A signal peptide spans M1–C22. The segment at K23–Y38 is interaction with ADGRG6. Positions K23 to S230 are interaction with GRB2, ERI3 and SYN1. Residues P26–S108 form a disordered region. Tandem repeats lie at residues P51–Q59, P60–Q67, P68–Q75, P76–Q83, and P84–Q91. Residues P51–Q91 are 5 X 8 AA tandem repeats of P-H-G-G-G-W-G-Q. Gly residues predominate over residues Q52–T95. Cu(2+) contacts are provided by H61, G62, G63, H69, G70, G71, H77, G78, G79, H85, G86, and G87. Cysteines 179 and 214 form a disulfide. N-linked (GlcNAc...) asparagine glycosylation is found at N181 and N197. A lipid anchor (GPI-anchor amidated serine) is attached at S230. The propeptide at S231 to G253 is removed in mature form.

This sequence belongs to the prion family. Monomer and homodimer. Has a tendency to aggregate into amyloid fibrils containing a cross-beta spine, formed by a steric zipper of superposed beta-strands. Soluble oligomers may represent an intermediate stage on the path to fibril formation. Copper binding may promote oligomerization. Interacts with GRB2, APP, ERI3/PRNPIP and SYN1. Mislocalized cytosolically exposed PrP interacts with MGRN1; this interaction alters MGRN1 subcellular location and causes lysosomal enlargement. Interacts with APP. Interacts with KIAA1191. Interacts with ADGRG6.

Its subcellular location is the cell membrane. It localises to the golgi apparatus. Functionally, its primary physiological function is unclear. May play a role in neuronal development and synaptic plasticity. May be required for neuronal myelin sheath maintenance. May promote myelin homeostasis through acting as an agonist for ADGRG6 receptor. May play a role in iron uptake and iron homeostasis. Soluble oligomers are toxic to cultured neuroblastoma cells and induce apoptosis (in vitro). Association with GPC1 (via its heparan sulfate chains) targets PRNP to lipid rafts. Also provides Cu(2+) or Zn(2+) for the ascorbate-mediated GPC1 deaminase degradation of its heparan sulfate side chains. This is Major prion protein (PRNP) from Colobus guereza (Mantled guereza).